Reading from the N-terminus, the 700-residue chain is Glycine--tRNA ligase beta subunit (700 aa).

This sequence belongs to the class-II aminoacyl-tRNA synthetase family. As to quaternary structure, tetramer of two alpha and two beta subunits.

The protein resides in the cytoplasm. It catalyses the reaction tRNA(Gly) + glycine + ATP = glycyl-tRNA(Gly) + AMP + diphosphate. The chain is Glycine--tRNA ligase beta subunit from Helicobacter pylori (strain Shi470).